Consider the following 342-residue polypeptide: (Lyso)-N-acylphosphatidylethanolamine lipase (342 aa).

One can recognise an AB hydrolase-1 domain in the interval 70–323 (PLVMVHGFGG…EIEGASHHVY (254 aa)).

Belongs to the peptidase S33 family. ABHD4/ABHD5 subfamily. Highest levels in the CNS and in testis, intermediate levels in liver and kidney. Hardly detectable in heart.

It carries out the reaction N-hexadecanoyl-1,2-di-(9Z-octadecenoyl)-sn-glycero-3-phosphoethanolamine + H2O = N-hexadecanoyl-1-(9Z-octadecenoyl)-sn-glycero-3-phosphoethanolamine + (9Z)-octadecenoate + H(+). The enzyme catalyses an N-acyl-1,2-diacyl-sn-glycero-3-phosphoethanolamine + H2O = N,1-diacyl-sn-glycero-3-phosphoethanolamine + a fatty acid + H(+). It catalyses the reaction N-hexadecanoyl-1-(9Z-octadecenoyl)-sn-glycero-3-phosphoethanolamine + H2O = N-hexadecanoyl-sn-glycero-3-phosphoethanolamine + (9Z)-octadecenoate + H(+). The catalysed reaction is N-octadecanoyl-1-(9Z-octadecenoyl)-sn-glycero-3-phosphoethanolamine + H2O = N-octadecanoyl-sn-glycero-3-phospho-ethanolamine + (9Z)-octadecenoate + H(+). It carries out the reaction N-eicosanoyl-1-(9Z-octadecenoyl)-sn-glycero-3-phosphoethanolamine + H2O = N-eicosanoyl-sn-glycero-3-phosphoethanolamine + (9Z)-octadecenoate + H(+). The enzyme catalyses N,1-di-(9Z-octadecenoyl)-sn-glycero-3-phosphoethanolamine + H2O = N-(9Z-octadecenoyl)-sn-glycero-3-phosphoethanolamine + (9Z)-octadecenoate + H(+). It catalyses the reaction N-(5Z,8Z,11Z,14Z-eicosatetraenoyl)-1-(9Z-octadecenoyl)-sn-glycero-3-phosphoethanolamine + H2O = N-(5Z,8Z,11Z,14Z-eicosatetraenoyl)-sn-glycero-3-phosphoethanolamine + (9Z)-octadecenoate + H(+). The catalysed reaction is 1-octadecanoyl-2-(9Z-octadecenoyl)-sn-glycero-3-phospho-(N-hexadecanoyl)-serine + H2O = 1-octadecanoyl-2-hydroxy-sn-glycero-3-phospho-(N-hexadecanoyl)-serine + (9Z)-octadecenoate + H(+). It carries out the reaction 1-O-(1Z-octadecenoyl)-2-(9Z-octadecenoyl)-sn-glycero-3-phospho-N-hexadecanoyl-ethanolamine + H2O = 1-O-(1Z-octadecenyl)-sn-glycero-3-phospho-N-hexadecanoyl-ethanolamine + (9Z)-octadecenoate + H(+). The enzyme catalyses N,1-diacyl-sn-glycero-3-phosphoethanolamine + H2O = N-acyl-sn-glycero-3-phosphoethanolamine + a fatty acid + H(+). Lysophospholipase selective for N-acyl phosphatidylethanolamine (NAPE). Contributes to the biosynthesis of N-acyl ethanolamines, including the endocannabinoid anandamide by hydrolyzing the sn-1 and sn-2 acyl chains from N-acyl phosphatidylethanolamine (NAPE) generating glycerophospho-N-acyl ethanolamine (GP-NAE), an intermediate for N-acyl ethanolamine biosynthesis. Hydrolyzes substrates bearing saturated, monounsaturated, polyunsaturated N-acyl chains. Shows no significant activity towards other lysophospholipids, including lysophosphatidylcholine, lysophosphatidylethanolamine and lysophosphatidylserine. The protein is (Lyso)-N-acylphosphatidylethanolamine lipase of Mus musculus (Mouse).